A 2225-amino-acid chain; its full sequence is Nonribisomal peptide synthetase notE' (2225 aa).

The tract at residues T24–S59 is disordered. Residues S28–P49 are compositionally biased toward low complexity. The segment at Q83–R482 is adenylation 1. Residues S614–T690 enclose the Carrier 1 domain. At S651 the chain carries O-(pantetheine 4'-phosphoryl)serine. The segment at E730 to L1142 is condensation 1. An adenylation 2 region spans residues A1164 to R1563. The Carrier 2 domain maps to P1699 to Q1775. S1736 is modified (O-(pantetheine 4'-phosphoryl)serine). The tract at residues F1827 to M2138 is condensation 2.

The protein belongs to the NRP synthetase family.

It catalyses the reaction L-proline + L-tryptophan + 2 ATP = brevianamide F + 2 AMP + 2 diphosphate + 2 H(+). The protein operates within alkaloid biosynthesis. Its function is as follows. Nonribisomal peptide synthetase; part of the gene cluster that mediates the biosynthesis of notoamide, a fungal indole alkaloid that belongs to a family of natural products containing a characteristic bicyclo[2.2.2]diazaoctane core. The first step of notoamide biosynthesis involves coupling of L-proline and L-tryptophan by the bimodular NRPS notE', to produce cyclo-L-tryptophan-L-proline called brevianamide F. The reverse prenyltransferase notF' then acts as a deoxybrevianamide E synthase and converts brevianamide F to deoxybrevianamide E via reverse prenylation at C-2 of the indole ring leading to the bicyclo[2.2.2]diazaoctane core. Deoxybrevianamide E is further hydroxylated at C-6 of the indole ring, likely catalyzed by the cytochrome P450 monooxygenase notG', to yield 6-hydroxy-deoxybrevianamide E. 6-hydroxy-deoxybrevianamide E is a specific substrate of the prenyltransferase notC' for normal prenylation at C-7 to produce 6-hydroxy-7-prenyl-deoxybrevianamide, also called notoamide S. As the proposed pivotal branching point in notoamide biosynthesis, notoamide S can be diverted to notoamide E through an oxidative pyran ring closure putatively catalyzed by either notH' cytochrome P450 monooxygenase or the notD' FAD-linked oxidoreductase. This step would be followed by an indole 2,3-epoxidation-initiated pinacol-like rearrangement catalyzed by the notB' FAD-dependent monooxygenase leading to the formation of notoamide C and notoamide D. On the other hand notoamide S is converted to notoamide T by notH' (or notD'), a bifunctional oxidase that also functions as the intramolecular Diels-Alderase responsible for generation of (-)-notoamide T. To generate antipodal (+)-notoaminide T, notH (or notD) in Aspergillus strain MF297-2 is expected to catalyze a Diels-Alder reaction leading to the opposite stereochemistry. The remaining oxidoreductase notD' (or notH') likely catalyzes the oxidative pyran ring formation to yield (-)-stephacidin A. The FAD-dependent monooxygenase notI' is highly similar to notB' and is predicted to catalyze a similar conversion from (-)-stephacidin A to (+)-notoamide B via the 2,3-epoxidation of (-)-stephacidin A followed by a pinacol-type rearrangement. Finally, it remains unclear which enzyme could be responsible for the final hydroxylation steps leading to notoamide A and sclerotiamide. In Aspergillus versicolor, this protein is Nonribisomal peptide synthetase notE'.